We begin with the raw amino-acid sequence, 206 residues long: Repetitive proline-rich cell wall protein 1 (206 aa).

The N-terminal stretch at 1–22 (MASSNFLVLLLFALFAIPQGLA) is a signal peptide. Repeat copies occupy residues 32 to 36 (PPVYK), 37 to 41 (PPVEK), 42 to 46 (PPVYK), 47 to 51 (PPVEK), 52 to 56 (PPVYK), 57 to 61 (PPVEK), 62 to 66 (PPVYK), 67 to 71 (PPVYK), 72 to 76 (PPVYK), 77 to 81 (PPVVK), 82 to 86 (PPVYK), 87 to 91 (PPVYK), 92 to 96 (PPVYK), 97 to 101 (PPVYK), 102 to 106 (PPVEK), 107 to 111 (PPVYK), 112 to 116 (PPVYK), 117 to 121 (PPVVK), 122 to 126 (PPVYK), 127 to 131 (PPVYK), 132 to 136 (PPVEK), 137 to 141 (PPVYK), 142 to 146 (PPVVK), 147 to 151 (PPVYK), 152 to 156 (PPVYK), 157 to 161 (PPVVK), 162 to 166 (PPVYK), 167 to 171 (PPVYK), 172 to 176 (PPVYK), 177 to 181 (PPVEK), 182 to 186 (PPVYK), 187 to 191 (PPVYK), and 192 to 196 (PPVEK). Residues 32–201 (PPVYKPPVEK…PPVEKPPVYG (170 aa)) are 34 X 5 AA approximate tandem repeats of P-P-V-[EVY]-K. The interval 51–84 (KPPVYKPPVEKPPVYKPPVYKPPVYKPPVVKPPV) is disordered. Residues 132–206 (PPVEKPPVYK…PPVYGPPHHP (75 aa)) are disordered. The 34; approximate repeat unit spans residues 197-201 (PPVYG).

Belongs to the plant proline-rich protein superfamily. ENOD12 family. In terms of tissue distribution, expressed in hypocotyls, roots and mature root nodules.

It is found in the secreted. The protein localises to the cell wall. Functionally, this is a developmentally regulated putative cell wall protein. This Medicago truncatula (Barrel medic) protein is Repetitive proline-rich cell wall protein 1 (PRP1).